A 100-amino-acid polypeptide reads, in one-letter code: uncharacterized protein (100 aa).

The segment at 78–100 (KPYRTESGTSSSNRMMLPPRQHV) is disordered.

This is an uncharacterized protein from Caenorhabditis elegans.